The chain runs to 61 residues: Large ribosomal subunit protein uL30 (61 aa).

Belongs to the universal ribosomal protein uL30 family. In terms of assembly, part of the 50S ribosomal subunit.

This Acidithiobacillus ferrooxidans (strain ATCC 23270 / DSM 14882 / CIP 104768 / NCIMB 8455) (Ferrobacillus ferrooxidans (strain ATCC 23270)) protein is Large ribosomal subunit protein uL30.